The primary structure comprises 534 residues: Cytochrome c oxidase subunit 1 (534 aa).

Residues 16 to 36 (VLYFIFAIFCGMAGTAMSLII) traverse the membrane as a helical segment. Ca(2+)-binding residues include Glu39, Ala42, and Gly44. The next 6 membrane-spanning stretches (helical) occupy residues 57–77 (VLVV…ALIG), 101–121 (ISFW…LVES), 147–167 (AIFA…NFIV), 182–202 (LPLF…SLPV), 235–255 (LFWF…FGII), and 267–287 (VFGE…GFLV). His62 is a binding site for Fe(II)-heme a. His241 is a Cu cation binding site. A cross-link (1'-histidyl-3'-tyrosine (His-Tyr)) is located at residues 241-245 (HPEVY). Tyr245 provides a ligand contact to O2. Residues His290 and His291 each contribute to the Cu cation site. The next 2 helical transmembrane spans lie at 310–330 (MIIA…IYGG) and 338–358 (MLYA…GVAL). 2 residues coordinate Mg(2+): His368 and Asp369. 2 consecutive transmembrane segments (helical) span residues 372-392 (YVVG…LFAG) and 412-432 (IQFW…HFLG). His376 contributes to the heme a3 binding site. Fe(II)-heme a is bound at residue His378. Ca(2+) is bound at residue Pro441. A helical membrane pass occupies residues 452–472 (YVASIGSIIAVFSLFLFIYIL).

It belongs to the heme-copper respiratory oxidase family. In terms of assembly, component of the cytochrome c oxidase (complex IV, CIV), a multisubunit enzyme composed of a catalytic core of 3 subunits and several supernumerary subunits. The complex exists as a monomer or a dimer and forms supercomplexes (SCs) in the inner mitochondrial membrane with ubiquinol-cytochrome c oxidoreductase (cytochrome b-c1 complex, complex III, CIII). Requires heme as cofactor. It depends on Cu cation as a cofactor.

It localises to the mitochondrion inner membrane. It carries out the reaction 4 Fe(II)-[cytochrome c] + O2 + 8 H(+)(in) = 4 Fe(III)-[cytochrome c] + 2 H2O + 4 H(+)(out). It functions in the pathway energy metabolism; oxidative phosphorylation. Its function is as follows. Component of the cytochrome c oxidase, the last enzyme in the mitochondrial electron transport chain which drives oxidative phosphorylation. The respiratory chain contains 3 multisubunit complexes succinate dehydrogenase (complex II, CII), ubiquinol-cytochrome c oxidoreductase (cytochrome b-c1 complex, complex III, CIII) and cytochrome c oxidase (complex IV, CIV), that cooperate to transfer electrons derived from NADH and succinate to molecular oxygen, creating an electrochemical gradient over the inner membrane that drives transmembrane transport and the ATP synthase. Cytochrome c oxidase is the component of the respiratory chain that catalyzes the reduction of oxygen to water. Electrons originating from reduced cytochrome c in the intermembrane space (IMS) are transferred via the dinuclear copper A center (CU(A)) of subunit 2 and heme A of subunit 1 to the active site in subunit 1, a binuclear center (BNC) formed by heme A3 and copper B (CU(B)). The BNC reduces molecular oxygen to 2 water molecules using 4 electrons from cytochrome c in the IMS and 4 protons from the mitochondrial matrix. The chain is Cytochrome c oxidase subunit 1 (COX1) from Kluyveromyces lactis (strain ATCC 8585 / CBS 2359 / DSM 70799 / NBRC 1267 / NRRL Y-1140 / WM37) (Yeast).